The chain runs to 664 residues: MLTKAFFLKNFDRSKELIPLSYADVFGAASQLLKKHHKQVDTEIDVQEDLIEDPVFEIDILELLNEAPELLFDSKNPRVKEAQIIIEKAKKDIASYFHLDNILDTDNLGLKATVTEKIQFTEKQIEAAVQNKKAAIIFKPVFTVNQCLIQPDAVVVHANGLCEFVVIKATTNTKRKFILEIIYDFLLFEKLGKYKLVNYYFCIVNYELKNKHNVSFFLNTEIKTAKNSSTSKTKEEQVLYGHLPFNDPKKIAYIHSKKSGGVNGFLLVKLVDNIIRSGVTNLEQIISFVFRELNAPSIRSLKQIISEVAKVQLDFWNIIDDVKQHQELQDNQITFNYSDAFNSFWNNYLLRNLIKLVFAYKYSEIFRLSGKLAKWDEVVEAYKENKSVKIDGFLYELNQGKMKKTKNPATSQFNKIHFFLRAWNDKKGIAVGNKFKSVWQKLKEKKVYFDFETISSAVRVIDKSLPFTQIVTQCSLIVDDNTESDKSKLVCQNLIFDPLTIGIEDFKTVVDALYQKQCDQYSFVVYNKSFEKNRLLEMATFINEAPYQQRVQAIIENLFDLADIFGLENDCLAFKQLDGFSSIKKVLPMIDQRFLDASRTVSYQSLKVQKGDVAQELTLARFLNCLDEQQWAQTALELKQYCENDVRAMIAIELFIKDFITNQL.

This is an uncharacterized protein from Mycoplasma pneumoniae (strain ATCC 29342 / M129 / Subtype 1) (Mycoplasmoides pneumoniae).